Reading from the N-terminus, the 311-residue chain is Pyrimidine-specific ribonucleoside hydrolase RihA (311 aa).

Histidine 240 is a catalytic residue.

It belongs to the IUNH family. RihA subfamily.

In terms of biological role, hydrolyzes cytidine or uridine to ribose and cytosine or uracil, respectively. In Salmonella typhimurium (strain LT2 / SGSC1412 / ATCC 700720), this protein is Pyrimidine-specific ribonucleoside hydrolase RihA.